We begin with the raw amino-acid sequence, 742 residues long: Phosphoribosylformylglycinamidine synthase subunit PurL (742 aa).

Residue His-53 is part of the active site. ATP contacts are provided by Tyr-56 and Lys-95. Residue Glu-97 coordinates Mg(2+). Residues 98–101 (SHNH) and Arg-120 contribute to the substrate site. Residue His-99 is the Proton acceptor of the active site. Asp-121 is a binding site for Mg(2+). Gln-245 provides a ligand contact to substrate. Residue Asp-275 coordinates Mg(2+). 319–321 (ESQ) contacts substrate. 2 residues coordinate ATP: Asp-502 and Gly-539. A Mg(2+)-binding site is contributed by Asn-540. A substrate-binding site is contributed by Ser-542.

It belongs to the FGAMS family. In terms of assembly, monomer. Part of the FGAM synthase complex composed of 1 PurL, 1 PurQ and 2 PurS subunits.

The protein resides in the cytoplasm. It carries out the reaction N(2)-formyl-N(1)-(5-phospho-beta-D-ribosyl)glycinamide + L-glutamine + ATP + H2O = 2-formamido-N(1)-(5-O-phospho-beta-D-ribosyl)acetamidine + L-glutamate + ADP + phosphate + H(+). Its pathway is purine metabolism; IMP biosynthesis via de novo pathway; 5-amino-1-(5-phospho-D-ribosyl)imidazole from N(2)-formyl-N(1)-(5-phospho-D-ribosyl)glycinamide: step 1/2. In terms of biological role, part of the phosphoribosylformylglycinamidine synthase complex involved in the purines biosynthetic pathway. Catalyzes the ATP-dependent conversion of formylglycinamide ribonucleotide (FGAR) and glutamine to yield formylglycinamidine ribonucleotide (FGAM) and glutamate. The FGAM synthase complex is composed of three subunits. PurQ produces an ammonia molecule by converting glutamine to glutamate. PurL transfers the ammonia molecule to FGAR to form FGAM in an ATP-dependent manner. PurS interacts with PurQ and PurL and is thought to assist in the transfer of the ammonia molecule from PurQ to PurL. The sequence is that of Phosphoribosylformylglycinamidine synthase subunit PurL from Lactobacillus acidophilus (strain ATCC 700396 / NCK56 / N2 / NCFM).